The sequence spans 657 residues: Pyoverdine export ATP-binding/permease protein PvdT (657 aa).

Residues 6–245 enclose the ABC transporter domain; that stretch reads IDLRGIRKSY…RSVNPAALQA (240 aa). Residue 43-50 participates in ATP binding; it reads GASGSGKS. The next 4 helical transmembrane spans lie at 285–305, 539–559, 590–610, and 620–640; these read ALTL…LAVG, IAAI…LMTV, LSVV…AALL, and LPAV…FGFM.

The protein belongs to the ABC transporter superfamily. Macrolide exporter (TC 3.A.1.122) family. Part of the tripartite efflux system PvdRT-OpmQ, which is composed of an inner membrane component with both ATPase and permease domains, PvdT, a periplasmic membrane fusion protein, PvdR, and an outer membrane component, OpmQ.

The protein resides in the cell inner membrane. Functionally, part of the tripartite efflux system PvdRT-OpmQ required for the secretion into the extracellular milieu of the siderophore pyoverdine (PVD), which is involved in iron acquisition. This subunit binds PVD and drives its secretion by hydrolyzing ATP. The system is responsible for export of newly synthesized PVD after the final steps of biosynthesis have taken place in the periplasm. It is also responsible for recycling of PVD after internalization of ferri-PVD into the periplasm by the outer-membrane receptor FpvA and release of iron from PVD, thus making PVD available for new cycles of iron uptake. This chain is Pyoverdine export ATP-binding/permease protein PvdT, found in Pseudomonas syringae pv. syringae (strain B728a).